The sequence spans 496 residues: MGVKLLADGCAGASSSPALSRVATSAAHGEGSPYFAGWKAYDEDPYDAAANPDGVIQMGLAENQVSIDLLEGYLREHPEAAAWGVAGDGGGDSFRDNALFQDYHGLANFRKAMARFMEKIMGGKATFDPDRIVLTAGATAANELLTFILADPRDALLIPTPYYPGFDRDLRWRTGVNVVPVHCDSANGFQVTAAALQAAHDEAAAAGMRVRGVLITNPSNPLGTTARREALEGILGFVARNDIHLVSDEIYSGSVFAAPDLVSVAELVESSSSRARHRGEDDDGDVGVADRVHVVYSLSKDLGLPGFRVGVVYSRNDAVVAAARRMSSFTLVSSQTQRTLAAVLSDEAFVDAYVAANRARLRERHDHVVAGLARAGVPCLRGNAGLFVWMDMRRLLLGDGGDAATFAGELRLWDRLLREVKLNVSPGSSCHCSEPGWFRVCFANMSLATLDVALERISRFMDAWCKATIGKFNHLQPNRCEVNYFALERYQGHVQQ.

The residue at position 300 (lysine 300) is an N6-(pyridoxal phosphate)lysine.

It belongs to the class-I pyridoxal-phosphate-dependent aminotransferase family. Pyridoxal 5'-phosphate serves as cofactor. Expressed in leaves. Expressed in shoots and leaf blades. Expressed at low levels in leaf sheaths.

It catalyses the reaction S-adenosyl-L-methionine = 1-aminocyclopropane-1-carboxylate + S-methyl-5'-thioadenosine + H(+). It functions in the pathway alkene biosynthesis; ethylene biosynthesis via S-adenosyl-L-methionine; ethylene from S-adenosyl-L-methionine: step 1/2. Catalyzes the formation of 1-aminocyclopropane-1-carboxylate, a direct precursor of ethylene in higher plants. This is 1-aminocyclopropane-1-carboxylate synthase 4 from Oryza sativa subsp. japonica (Rice).